An 87-amino-acid chain; its full sequence is Small ribosomal subunit protein bS18 (87 aa).

Residues 1 to 10 (MAGKSSGDRR) are compositionally biased toward basic and acidic residues. Residues 1–23 (MAGKSSGDRRKPLRGAKGGKNAA) form a disordered region.

Belongs to the bacterial ribosomal protein bS18 family. As to quaternary structure, part of the 30S ribosomal subunit. Forms a tight heterodimer with protein bS6.

Functionally, binds as a heterodimer with protein bS6 to the central domain of the 16S rRNA, where it helps stabilize the platform of the 30S subunit. In Clavibacter michiganensis subsp. michiganensis (strain NCPPB 382), this protein is Small ribosomal subunit protein bS18.